The sequence spans 393 residues: 5-amino-6-(D-ribitylamino)uracil--L-tyrosine 4-hydroxyphenyl transferase (393 aa).

The Radical SAM core domain occupies 71–318 (VTYVINRNIN…TAVSRIFLGN (248 aa)). [4Fe-4S] cluster-binding residues include Cys-85, Cys-89, and Cys-92.

The protein belongs to the radical SAM superfamily. CofH family. As to quaternary structure, consists of two subunits, CofG and CofH. Requires [4Fe-4S] cluster as cofactor.

The catalysed reaction is 5-amino-6-(D-ribitylamino)uracil + L-tyrosine + S-adenosyl-L-methionine = 5-amino-5-(4-hydroxybenzyl)-6-(D-ribitylimino)-5,6-dihydrouracil + 2-iminoacetate + 5'-deoxyadenosine + L-methionine + H(+). It participates in cofactor biosynthesis; coenzyme F0 biosynthesis. Its function is as follows. Catalyzes the radical-mediated synthesis of 5-amino-5-(4-hydroxybenzyl)-6-(D-ribitylimino)-5,6-dihydrouracil from 5-amino-6-(D-ribitylamino)uracil and L-tyrosine. This Trichodesmium erythraeum (strain IMS101) protein is 5-amino-6-(D-ribitylamino)uracil--L-tyrosine 4-hydroxyphenyl transferase.